The sequence spans 328 residues: Nickel import system permease protein NikB (328 aa).

A run of 6 helical transmembrane segments spans residues 11–31, 104–124, 139–159, 170–190, 229–249, and 279–299; these read LMQM…LMKL, LLIS…LGII, VIST…LLFI, ILSQ…AYII, ILPI…GTVV, and VLFI…LTLL. The ABC transmembrane type-1 domain maps to 100–297; the sequence is APITLLISFS…IINTIADLLT (198 aa).

This sequence belongs to the binding-protein-dependent transport system permease family. OppBC subfamily. In terms of assembly, the complex is composed of two ATP-binding proteins (NikD and NikE), two transmembrane proteins (NikB and NikC) and a solute-binding protein (NikA).

The protein localises to the cell membrane. Its function is as follows. Part of the ABC transporter complex NikABCDE (Opp2) involved in nickel import. Probably responsible for the translocation of the substrate across the membrane. This is Nickel import system permease protein NikB from Staphylococcus aureus (strain bovine RF122 / ET3-1).